The following is a 667-amino-acid chain: MLRTCDITHIKNNYEAIIWKGERDCSTISTKYPNSAIFYKKRFIMLTPELGFAHSYNQQVKPLYTFCEKQRHLKNRKPLTILPSLSHKLQEMKFLPASDKSFESQYTEFLESFKILYREPLFLQIDGFIKDFRKWIKGEFNDFGDTRKIQLEPFQKNILIHVIFFIAVTKLPALANRVINYLTHVFDIEFVNESTLNTLKQKTNVFLVPRRHGKTWFIVPIISFLLKNIEGISIGYVAHQKHVSHFVMKEVEFKCRRMFPEKTITCLDNVITIDHQNIKSTALFASCYNTHQSIRGQSFNLLIVDESHFIKKDAFSTILGFLPQASTKILFISSTNSGNHSTSFLMKLNNSPFEMLSVVSYVCEDHAHMLNERGNATACSCYRLHKPKFISINAEVKKTANLFLEGAFIHEIMGGATCNVINDVLITEQGQTEFEFFRYSTINKNLIPFLGKDLYVYLDPAYTGNRRASGTGIAAIGTYLDQYIVYGMEHYFLESLMTSSDTAIAECAAHMILSILDLHPFFTEVKIIIEGNSNQASAVKIACIIKENITANKSIQVTFFHTPDQNQIAQPFYLLGKEKKLAVEFFISNFNSGNIKASQELISFTIKITYDPVEYALEQIRNIHQISVNNYITYSAKKQACSDDLIIAIIMAIYVCSGNSSASFREI.

Residues 208–215 (VPRRHGKT) carry the Walker A motif motif. A Walker B motif motif is present at residues 301–306 (LLIVDE). Glu-306 (for ATPase activity) is an active-site residue. Active-site for nuclease activity residues include Asp-459, Glu-530, and Asp-644.

This sequence belongs to the herpesviridae TRM3 protein family. In terms of assembly, interacts with the terminase subunits TRM1 and TRM2. Interacts with portal protein.

The protein localises to the host nucleus. Functionally, component of the molecular motor that translocates viral genomic DNA in empty capsid during DNA packaging. Forms a tripartite terminase complex together with TRM1 and TRM2 in the host cytoplasm. Once the complex reaches the host nucleus, it interacts with the capsid portal vertex. This portal forms a ring in which genomic DNA is translocated into the capsid. TRM3 carries an RNase H-like nuclease activity that plays an important role for the cleavage of concatemeric viral DNA into unit length genomes. This chain is Tripartite terminase subunit 3, found in Human herpesvirus 6A (strain Uganda-1102) (HHV-6 variant A).